Consider the following 177-residue polypeptide: Austinoid biosynthesis clusters protein F (177 aa).

Belongs to the trt14 isomerase family. In terms of assembly, homodimer.

The protein operates within secondary metabolite biosynthesis; terpenoid biosynthesis. In terms of biological role, part of the gene cluster B that mediates the biosynthesis of austinol and dehydroaustinol, two fungal meroterpenoids. The first step of the pathway is the synthesis of 3,5-dimethylorsellinic acid by the polyketide synthase ausA. 3,5-dimethylorsellinic acid is then prenylated by the polyprenyl transferase ausN. Further epoxidation by the FAD-dependent monooxygenase ausM and cyclization by the probable terpene cyclase ausL lead to the formation of protoaustinoid A. Protoaustinoid A is then oxidized to spiro-lactone preaustinoid A3 by the combined action of the FAD-binding monooxygenases ausB and ausC, and the dioxygenase ausE. Acid-catalyzed keto-rearrangement and ring contraction of the tetraketide portion of preaustinoid A3 by ausJ lead to the formation of preaustinoid A4. The aldo-keto reductase ausK, with the help of ausH, is involved in the next step by transforming preaustinoid A4 into isoaustinone which is in turn hydroxylated by the P450 monooxygenase ausI to form austinolide. Finally, the cytochrome P450 monooxygenase ausG modifies austinolide to austinol. Austinol can be further modified to dehydroaustinol which forms a diffusible complex with diorcinol that initiates conidiation. Due to genetic rearrangements of the clusters and the subsequent loss of some enzymes, the end products of the Emericella nidulans austinoid biosynthesis clusters are austinol and dehydroaustinol, even if additional enzymes, such as the O-acetyltransferase ausQ and the cytochrome P450 monooxygenase ausR are still functional. This Emericella nidulans (strain FGSC A4 / ATCC 38163 / CBS 112.46 / NRRL 194 / M139) (Aspergillus nidulans) protein is Austinoid biosynthesis clusters protein F.